A 301-amino-acid polypeptide reads, in one-letter code: UBX domain-containing protein 2 (301 aa).

The tract at residues 1 to 61 (MSRNIRTFRD…AARGPDSEAH (61 aa)) is disordered. The region spanning 89–153 (TISLTLHLWS…KVNRHHEEYV (65 aa)) is the SEP domain. Residues 176 to 200 (GQSSSSATTAGTSSATTDHNPDHTA) are disordered. Positions 178-192 (SSSSATTAGTSSATT) are enriched in low complexity. In terms of domain architecture, UBX spans 218 to 295 (MNEPTTNIQI…NVLNSVVAVK (78 aa)).

The protein belongs to the NSFL1C family. In terms of assembly, interacts with cdc-48.1 (via N-terminus) and cdc-48.2 (via N-terminus). Interacts with kinase air-1. In terms of tissue distribution, expressed in the germline (at protein level). Expressed in spermatocytes but not in mature sperm (at protein level). Ubiquitously expressed. Predominantly expressed in the spermatheca.

The protein localises to the cytoplasm. Its subcellular location is the perinuclear region. It is found in the nucleus. The protein resides in the cytoskeleton. It localises to the microtubule organizing center. The protein localises to the centrosome. Its function is as follows. Ubiquitin-binding protein which acts as an adapter for ATPase cdc-48.1 and/or cdc-48.2, conferring substrate specificity. Together with ubxn-2 and ubxn-3, plays a role in hermaphrodite spermatogenesis probably by promoting the degradation of sex determination terminal factor tra-1. Probably in association with ATPase cdc-48.1 or/and cdc-48.2, regulates the centrosomal levels of kinase air-1 levels during mitotic progression by promoting air-1 removal from centrosomes in prophase. Also, regulates spindle orientation in the one-cell embryo by controlling centration and rotation of the pronuclei-centrosome complex in prophase. This chain is UBX domain-containing protein 2, found in Caenorhabditis elegans.